Here is a 375-residue protein sequence, read N- to C-terminus: Kininogen (375 aa).

An N-terminal signal peptide occupies residues 1–23 (MKLGVRLCVLVVFSLQLWGPGQG). Cystatin kininogen-type domains follow at residues 35–139 (CDDK…VEAP) and 156–260 (VESE…GPLD). Asn-74 carries N-linked (GlcNAc) asparagine glycosylation. 4 disulfides stabilise this stretch: Cys-91–Cys-102, Cys-115–Cys-133, Cys-211–Cys-223, and Cys-234–Cys-254. N-linked (GlcNAc) asparagine glycosylation is present at Asn-235. A disordered region spans residues 283–375 (EVKTTQASTA…LSDLDLLGKK (93 aa)).

N-glycosylated, with sialylated biantennary complex-type glycans. Post-translationally, O-glycosylated, sialylated oligosaccharides. In terms of processing, bradykinin is released from kininogen by kallikrein. The N-terminus is blocked. Expressed in the skin, liver, intestine, spleen, pancreas and kidney.

Its subcellular location is the cytoplasm. The protein resides in the vacuole. In terms of biological role, inhibits papain and ficin (cysteine proteinases) but not trypsin (a serine proteinase). This chain is Kininogen (LOC106584303), found in Salmo salar (Atlantic salmon).